The chain runs to 436 residues: Bystin (436 aa).

At Thr145 the chain carries Phosphothreonine. 2 positions are modified to phosphoserine: Ser148 and Ser152.

The protein belongs to the bystin family.

The protein localises to the nucleus. It is found in the nucleolus. Its function is as follows. Required for processing of 20S pre-rRNA precursor and biogenesis of 40S ribosomal subunits. The polypeptide is Bystin (bys) (Drosophila melanogaster (Fruit fly)).